The primary structure comprises 275 residues: Large ribosomal subunit protein uL2 (275 aa).

The interval 214–275 (RWRGNRPTVR…NKFILSHRNK (62 aa)) is disordered. Positions 255 to 275 (KGKKTRSNKRTNKFILSHRNK) are enriched in basic residues.

This sequence belongs to the universal ribosomal protein uL2 family. Part of the 50S ribosomal subunit. Forms a bridge to the 30S subunit in the 70S ribosome.

Its function is as follows. One of the primary rRNA binding proteins. Required for association of the 30S and 50S subunits to form the 70S ribosome, for tRNA binding and peptide bond formation. It has been suggested to have peptidyltransferase activity; this is somewhat controversial. Makes several contacts with the 16S rRNA in the 70S ribosome. This is Large ribosomal subunit protein uL2 from Blochmanniella pennsylvanica (strain BPEN).